Here is a 252-residue protein sequence, read N- to C-terminus: Chitooligosaccharide deacetylase (252 aa).

Mg(2+)-binding residues include histidine 61 and histidine 125.

It belongs to the YdjC deacetylase family. ChbG subfamily. As to quaternary structure, homodimer. Mg(2+) serves as cofactor.

Its subcellular location is the cytoplasm. It carries out the reaction N,N'-diacetylchitobiose + H2O = N-acetyl-beta-D-glucosaminyl-(1-&gt;4)-D-glucosamine + acetate. It catalyses the reaction diacetylchitobiose-6'-phosphate + H2O = N'-monoacetylchitobiose-6'-phosphate + acetate. It participates in glycan degradation; chitin degradation. Its function is as follows. Involved in the degradation of chitin. ChbG is essential for growth on the acetylated chitooligosaccharides chitobiose and chitotriose but is dispensable for growth on cellobiose and chitosan dimer, the deacetylated form of chitobiose. Deacetylation of chitobiose-6-P and chitotriose-6-P is necessary for both the activation of the chb promoter by the regulatory protein ChbR and the hydrolysis of phosphorylated beta-glucosides by the phospho-beta-glucosidase ChbF. Catalyzes the removal of only one acetyl group from chitobiose-6-P to yield monoacetylchitobiose-6-P, the inducer of ChbR and the substrate of ChbF. This is Chitooligosaccharide deacetylase from Enterobacter sp. (strain 638).